The primary structure comprises 173 residues: N-alpha-acetyltransferase 20 (173 aa).

Positions 2–151 (TTIRRFVCDD…DALDMRKALP (150 aa)) constitute an N-acetyltransferase domain.

The protein belongs to the acetyltransferase family. ARD1 subfamily.

Its function is as follows. Seems to be involved in N-acetylation. This Dictyostelium discoideum (Social amoeba) protein is N-alpha-acetyltransferase 20 (nat5).